The following is a 481-amino-acid chain: UDP-N-acetylmuramate--L-alanine ligase (481 aa).

An ATP-binding site is contributed by 115-121 (GTHGKTT).

It belongs to the MurCDEF family.

Its subcellular location is the cytoplasm. The catalysed reaction is UDP-N-acetyl-alpha-D-muramate + L-alanine + ATP = UDP-N-acetyl-alpha-D-muramoyl-L-alanine + ADP + phosphate + H(+). Its pathway is cell wall biogenesis; peptidoglycan biosynthesis. Cell wall formation. This chain is UDP-N-acetylmuramate--L-alanine ligase, found in Rhodospirillum rubrum (strain ATCC 11170 / ATH 1.1.1 / DSM 467 / LMG 4362 / NCIMB 8255 / S1).